Consider the following 445-residue polypeptide: DNA primase DnaG (445 aa).

The Toprim domain maps to 166 to 252; the sequence is DAIVVVEGRS…SVEDLSRSEV (87 aa). Mg(2+)-binding residues include Glu172, Asp214, and Asp216. A disordered region spans residues 276-355; it reads EEMSQAGEST…NGDGPTIPSL (80 aa). The span at 284–298 shows a compositional bias: low complexity; sequence STTADGGAVAAATSD. Polar residues predominate over residues 303–313; the sequence is NQPSPSSQTGS. A compositionally biased stretch (low complexity) spans 324-337; it reads SVVDNSNATAVADA.

Belongs to the archaeal DnaG primase family. As to quaternary structure, forms a ternary complex with MCM helicase and DNA. Requires Mg(2+) as cofactor.

It carries out the reaction ssDNA + n NTP = ssDNA/pppN(pN)n-1 hybrid + (n-1) diphosphate.. RNA polymerase that catalyzes the synthesis of short RNA molecules used as primers for DNA polymerase during DNA replication. This chain is DNA primase DnaG, found in Haloarcula marismortui (strain ATCC 43049 / DSM 3752 / JCM 8966 / VKM B-1809) (Halobacterium marismortui).